Consider the following 282-residue polypeptide: Bifunctional protein FolD (282 aa).

NADP(+) is bound by residues 165-167, Ser190, and Thr231; that span reads GRS.

It belongs to the tetrahydrofolate dehydrogenase/cyclohydrolase family. As to quaternary structure, homodimer.

The enzyme catalyses (6R)-5,10-methylene-5,6,7,8-tetrahydrofolate + NADP(+) = (6R)-5,10-methenyltetrahydrofolate + NADPH. It carries out the reaction (6R)-5,10-methenyltetrahydrofolate + H2O = (6R)-10-formyltetrahydrofolate + H(+). It functions in the pathway one-carbon metabolism; tetrahydrofolate interconversion. In terms of biological role, catalyzes the oxidation of 5,10-methylenetetrahydrofolate to 5,10-methenyltetrahydrofolate and then the hydrolysis of 5,10-methenyltetrahydrofolate to 10-formyltetrahydrofolate. The chain is Bifunctional protein FolD from Clostridium botulinum (strain Alaska E43 / Type E3).